The primary structure comprises 525 residues: Transcriptional regulatory protein TOD6 (525 aa).

The disordered stretch occupies residues 22-82 (GFSILSKHPH…NNPSSWDPSD (61 aa)). Residues 35–47 (LVHSHSLSHTNAK) are compositionally biased toward polar residues. The segment covering 61–71 (STNKEEAESLK) has biased composition (basic and acidic residues). Positions 67–124 (AESLKKNNPSSWDPSDDIKLRHLKEIKNLGWKEIAHHFPNRTPNACQFRWRRLKSGNL) constitute an HTH myb-type domain. The H-T-H motif DNA-binding region spans 97-120 (WKEIAHHFPNRTPNACQFRWRRLK). The residue at position 280 (S280) is a Phosphoserine. Positions 283–308 (PSTQIPHSTTKTRKNSHSVISSRRSS) are disordered. The segment covering 299 to 308 (HSVISSRRSS) has biased composition (low complexity). Phosphoserine is present on residues S333, S341, and S366. The segment at 451-510 (TNEGCKDEEEEDDIDPLHKENGINTPSQQSQNYGMLEAKHDNPKSSELSSMTSANDIRNE) is disordered. 2 stretches are compositionally biased toward polar residues: residues 472 to 483 (GINTPSQQSQNY) and 495 to 506 (SSELSSMTSAND).

This sequence belongs to the DOT6 family. As to quaternary structure, component of the RPD3C(L) complex composed of at least ASH1, CTI6, DEP1, DOT6, PHO23, RPD3, RXT2, RXT3, SAP30, SDS3, SIN3, TOD6; UME1 and UME6.

Its subcellular location is the cytoplasm. It localises to the nucleus. Its function is as follows. Component of the RPD3 histone deacetylase complex RPD3C(L) responsible for the deacetylation of lysine residues on the N-terminal part of the core histones (H2A, H2B, H3 and H4). Histone deacetylation gives a tag for epigenetic repression and plays an important role in transcriptional regulation, cell cycle progression and developmental events. TOD6 binds to sequences containing the core CGATG, which resembles the PAC (Polymerase A and C) motif. This chain is Transcriptional regulatory protein TOD6 (TOD6), found in Saccharomyces cerevisiae (strain ATCC 204508 / S288c) (Baker's yeast).